A 234-amino-acid chain; its full sequence is Large ribosomal subunit protein uL1 (234 aa).

Belongs to the universal ribosomal protein uL1 family. Part of the 50S ribosomal subunit.

Its function is as follows. Binds directly to 23S rRNA. The L1 stalk is quite mobile in the ribosome, and is involved in E site tRNA release. Functionally, protein L1 is also a translational repressor protein, it controls the translation of the L11 operon by binding to its mRNA. The chain is Large ribosomal subunit protein uL1 from Aliivibrio fischeri (strain ATCC 700601 / ES114) (Vibrio fischeri).